Reading from the N-terminus, the 572-residue chain is Proline--tRNA ligase (572 aa).

It belongs to the class-II aminoacyl-tRNA synthetase family. ProS type 1 subfamily. Homodimer.

The protein localises to the cytoplasm. The catalysed reaction is tRNA(Pro) + L-proline + ATP = L-prolyl-tRNA(Pro) + AMP + diphosphate. Its function is as follows. Catalyzes the attachment of proline to tRNA(Pro) in a two-step reaction: proline is first activated by ATP to form Pro-AMP and then transferred to the acceptor end of tRNA(Pro). As ProRS can inadvertently accommodate and process non-cognate amino acids such as alanine and cysteine, to avoid such errors it has two additional distinct editing activities against alanine. One activity is designated as 'pretransfer' editing and involves the tRNA(Pro)-independent hydrolysis of activated Ala-AMP. The other activity is designated 'posttransfer' editing and involves deacylation of mischarged Ala-tRNA(Pro). The misacylated Cys-tRNA(Pro) is not edited by ProRS. This chain is Proline--tRNA ligase, found in Psychrobacter cryohalolentis (strain ATCC BAA-1226 / DSM 17306 / VKM B-2378 / K5).